The following is a 793-amino-acid chain: Probable phosphoketolase (793 aa).

The protein belongs to the XFP family. Thiamine diphosphate is required as a cofactor.

The protein is Probable phosphoketolase of Streptomyces avermitilis (strain ATCC 31267 / DSM 46492 / JCM 5070 / NBRC 14893 / NCIMB 12804 / NRRL 8165 / MA-4680).